We begin with the raw amino-acid sequence, 186 residues long: Proline-rich protein 3 (186 aa).

The tract at residues Met-1–Arg-97 is disordered. Pro residues-rich tracts occupy residues Met-33–Met-44 and Met-67–Arg-79. The C3H1-type zinc finger occupies Lys-153–Val-181.

In Rattus norvegicus (Rat), this protein is Proline-rich protein 3 (Prr3).